Consider the following 492-residue polypeptide: Ketol-acid reductoisomerase (NADP(+)) (492 aa).

In terms of domain architecture, KARI N-terminal Rossmann spans 14–208; the sequence is LDQLGRCRFM…GGHKAGVLES (195 aa). NADP(+) contacts are provided by residues 45–48, R68, R76, S78, and 108–110; these read CGAQ and DKQ. The active site involves H132. G158 lines the NADP(+) pocket. KARI C-terminal knotted domains are found at residues 209 to 344 and 345 to 485; these read SFVA…NAPK and YDGK…MTDM. D217, E221, E389, and E393 together coordinate Mg(2+). Position 414 (S414) interacts with substrate.

This sequence belongs to the ketol-acid reductoisomerase family. Mg(2+) serves as cofactor.

It carries out the reaction (2R)-2,3-dihydroxy-3-methylbutanoate + NADP(+) = (2S)-2-acetolactate + NADPH + H(+). The catalysed reaction is (2R,3R)-2,3-dihydroxy-3-methylpentanoate + NADP(+) = (S)-2-ethyl-2-hydroxy-3-oxobutanoate + NADPH + H(+). It functions in the pathway amino-acid biosynthesis; L-isoleucine biosynthesis; L-isoleucine from 2-oxobutanoate: step 2/4. The protein operates within amino-acid biosynthesis; L-valine biosynthesis; L-valine from pyruvate: step 2/4. In terms of biological role, involved in the biosynthesis of branched-chain amino acids (BCAA). Catalyzes an alkyl-migration followed by a ketol-acid reduction of (S)-2-acetolactate (S2AL) to yield (R)-2,3-dihydroxy-isovalerate. In the isomerase reaction, S2AL is rearranged via a Mg-dependent methyl migration to produce 3-hydroxy-3-methyl-2-ketobutyrate (HMKB). In the reductase reaction, this 2-ketoacid undergoes a metal-dependent reduction by NADPH to yield (R)-2,3-dihydroxy-isovalerate. This is Ketol-acid reductoisomerase (NADP(+)) from Haemophilus influenzae (strain PittEE).